Here is a 349-residue protein sequence, read N- to C-terminus: Small ribosomal subunit biogenesis GTPase RsgA (349 aa).

The span at 1–11 (MSKKKLSKGQQ) shows a compositional bias: basic residues. The interval 1–35 (MSKKKLSKGQQRRVSANHQRRLKHADSKVEWDDSQ) is disordered. One can recognise a CP-type G domain in the interval 111–272 (YDGLKPIAAN…VIDSPGVREF (162 aa)). Residues 158 to 161 (NKID) and 212 to 220 (GQSGVGKSS) contribute to the GTP site. C296, C301, H303, and C309 together coordinate Zn(2+).

It belongs to the TRAFAC class YlqF/YawG GTPase family. RsgA subfamily. Monomer. Associates with 30S ribosomal subunit, binds 16S rRNA. The cofactor is Zn(2+).

It is found in the cytoplasm. Its function is as follows. One of several proteins that assist in the late maturation steps of the functional core of the 30S ribosomal subunit. Helps release RbfA from mature subunits. May play a role in the assembly of ribosomal proteins into the subunit. Circularly permuted GTPase that catalyzes slow GTP hydrolysis, GTPase activity is stimulated by the 30S ribosomal subunit. This chain is Small ribosomal subunit biogenesis GTPase RsgA, found in Dickeya dadantii (strain 3937) (Erwinia chrysanthemi (strain 3937)).